Reading from the N-terminus, the 167-residue chain is 2-C-methyl-D-erythritol 2,4-cyclodiphosphate synthase (167 aa).

Positions 11 and 13 each coordinate a divalent metal cation. 4-CDP-2-C-methyl-D-erythritol 2-phosphate is bound by residues 11–13 (DIH) and 37–38 (HS). His-45 lines the a divalent metal cation pocket. Residues 59-61 (DIG), 64-68 (FSDTD), 103-109 (AQAPKMA), and Arg-145 contribute to the 4-CDP-2-C-methyl-D-erythritol 2-phosphate site.

The protein belongs to the IspF family. As to quaternary structure, homotrimer. A divalent metal cation serves as cofactor.

The catalysed reaction is 4-CDP-2-C-methyl-D-erythritol 2-phosphate = 2-C-methyl-D-erythritol 2,4-cyclic diphosphate + CMP. It functions in the pathway isoprenoid biosynthesis; isopentenyl diphosphate biosynthesis via DXP pathway; isopentenyl diphosphate from 1-deoxy-D-xylulose 5-phosphate: step 4/6. In terms of biological role, involved in the biosynthesis of isopentenyl diphosphate (IPP) and dimethylallyl diphosphate (DMAPP), two major building blocks of isoprenoid compounds. Catalyzes the conversion of 4-diphosphocytidyl-2-C-methyl-D-erythritol 2-phosphate (CDP-ME2P) to 2-C-methyl-D-erythritol 2,4-cyclodiphosphate (ME-CPP) with a corresponding release of cytidine 5-monophosphate (CMP). This chain is 2-C-methyl-D-erythritol 2,4-cyclodiphosphate synthase, found in Nitrosomonas eutropha (strain DSM 101675 / C91 / Nm57).